A 485-amino-acid polypeptide reads, in one-letter code: NADH-quinone oxidoreductase subunit N (485 aa).

14 consecutive transmembrane segments (helical) span residues 8 to 28, 35 to 55, 71 to 91, 105 to 125, 127 to 147, 159 to 179, 203 to 223, 235 to 255, 271 to 291, 297 to 317, 326 to 346, 373 to 393, 408 to 430, and 455 to 475; these read LIAL…MLSI, FLNA…LWFV, GFAM…CTFA, FYLL…ANHL, ALFL…GYAF, YTIL…LVYA, LLAG…LVPF, PAPV…GVVM, VVLG…ALSQ, LLGY…IALQ, VGVY…VVSL, AAVM…LGFI, WWLV…RVAV, and IVVL…QPLI.

It belongs to the complex I subunit 2 family. NDH-1 is composed of 13 different subunits. Subunits NuoA, H, J, K, L, M, N constitute the membrane sector of the complex.

It is found in the cell inner membrane. The enzyme catalyses a quinone + NADH + 5 H(+)(in) = a quinol + NAD(+) + 4 H(+)(out). Functionally, NDH-1 shuttles electrons from NADH, via FMN and iron-sulfur (Fe-S) centers, to quinones in the respiratory chain. The immediate electron acceptor for the enzyme in this species is believed to be ubiquinone. Couples the redox reaction to proton translocation (for every two electrons transferred, four hydrogen ions are translocated across the cytoplasmic membrane), and thus conserves the redox energy in a proton gradient. This is NADH-quinone oxidoreductase subunit N from Salmonella schwarzengrund (strain CVM19633).